The sequence spans 123 residues: PCNA-associated factor (123 aa).

Positions M1–E123 are disordered. Residues R26–N37 carry the D-box motif. The PIP-box motif lies at Q66 to S77. A KEN box motif is present at residues K83 to N85. Positions E93–K105 match the Initiation motif motif. A compositionally biased stretch (acidic residues) spans P113–E123.

As to quaternary structure, interacts with pcna.

The protein localises to the nucleus. It localises to the cytoplasm. The protein resides in the perinuclear region. PCNA-binding protein that acts as a regulator of DNA repair during DNA replication. Following DNA damage, the interaction with pcna is disrupted, facilitating the interaction between monoubiquitinated pcna and the translesion DNA synthesis DNA polymerase eta (polh) at stalled replisomes, facilitating the bypass of replication-fork-blocking lesions. Also acts as a regulator of centrosome number. In Xenopus laevis (African clawed frog), this protein is PCNA-associated factor.